A 505-amino-acid chain; its full sequence is Protein ERGIC-53-like (505 aa).

The first 25 residues, 1 to 25, serve as a signal peptide directing secretion; the sequence is MLEIRGLSPSLCLLSLLLVLHGAER. Residues 26 to 438 are Lumenal-facing; it reads SQPPPRRRFE…SGWLLGSSTC (413 aa). An L-type lectin-like domain is found at 32–254; that stretch reads RRFEYKLSFK…DVLSFLTFSL (223 aa). Residue N84 is glycosylated (N-linked (GlcNAc...) asparagine). A disulfide bridge connects residues C177 and C216. The chain crosses the membrane as a helical span at residues 439–459; that stretch reads LHTSIFLFFLLLQTVGFFCYV. Residues 460–505 lie on the Cytoplasmic side of the membrane; that stretch reads NFSRQELDKRLQEYLSTGSLSLEPALPITRTIGVLRRQPISPSMQA.

The protein resides in the endoplasmic reticulum-Golgi intermediate compartment membrane. This is Protein ERGIC-53-like (Lman1l) from Mus musculus (Mouse).